Consider the following 94-residue polypeptide: Co-chaperonin GroES (94 aa).

It belongs to the GroES chaperonin family. In terms of assembly, heptamer of 7 subunits arranged in a ring. Interacts with the chaperonin GroEL.

It localises to the cytoplasm. Its function is as follows. Together with the chaperonin GroEL, plays an essential role in assisting protein folding. The GroEL-GroES system forms a nano-cage that allows encapsulation of the non-native substrate proteins and provides a physical environment optimized to promote and accelerate protein folding. GroES binds to the apical surface of the GroEL ring, thereby capping the opening of the GroEL channel. The protein is Co-chaperonin GroES of Streptococcus pneumoniae (strain Hungary19A-6).